The chain runs to 474 residues: A-type ATP synthase subunit B (474 aa).

The protein belongs to the ATPase alpha/beta chains family. In terms of assembly, has multiple subunits with at least A(3), B(3), C, D, E, F, H, I and proteolipid K(x).

It is found in the cell membrane. Functionally, component of the A-type ATP synthase that produces ATP from ADP in the presence of a proton gradient across the membrane. The B chain is a regulatory subunit. This chain is A-type ATP synthase subunit B, found in Halorubrum lacusprofundi (strain ATCC 49239 / DSM 5036 / JCM 8891 / ACAM 34).